The primary structure comprises 209 residues: uncharacterized protein (209 aa).

The protein resides in the plastid. It is found in the chloroplast. This is an uncharacterized protein from Porphyra purpurea (Red seaweed).